The following is a 591-amino-acid chain: PDZ and LIM domain protein 5 (591 aa).

The residue at position 2 (S2) is an N-acetylserine. Position 2 is a phosphoserine (S2). In terms of domain architecture, PDZ spans 2-85; the sequence is SNYSVSLVGP…SLNMTLQRAS (84 aa). An N6-acetyllysine; alternate modification is found at K89. K89 is modified (N6-succinyllysine; alternate). A Glycyl lysine isopeptide (Lys-Gly) (interchain with G-Cter in SUMO2); alternate cross-link involves residue K89. Residues E102, K105, S111, S134, and S137 each carry the phosphoserine modification. 2 disordered regions span residues 121–166 and 186–398; these read TNMA…PTPV and SADQ…DQDT. Over residues 134–143 the composition is skewed to polar residues; the sequence is SVSSPKVTSI. Positions 144–166 are enriched in low complexity; that stretch reads PSPSSAFTPAHAATSSHASPTPV. Polar residues-rich tracts occupy residues 186–195 and 205–217; these read SADQCSSPPN and RQPT…SESA. Phosphoserine occurs at positions 218, 228, and 260. 2 stretches are compositionally biased toward basic and acidic residues: residues 258-273 and 294-304; these read DASK…DWRP and HLTESENDNTK. Residues 310 to 339 are compositionally biased toward low complexity; sequence QEPSQQPASSGASPLSASEGPESPGSSRPS. Phosphoserine is present on residues S313, P316, and S322. K350 carries the N6-acetyllysine modification. The segment covering 353 to 385 has biased composition (polar residues); that stretch reads GSTSVKSPSWQRPNQAAPSTGRISNNARSSGTG. A phosphoserine mark is found at S359 and S361. 3 consecutive LIM zinc-binding domains span residues 413-472, 472-531, and 531-591; these read PMCA…FFAP, PECG…LFGT, and TICR…SVNF.

In terms of assembly, interacts with various PKC isoforms through the LIM domains. Interacts with actin and alpha-actinin through the PDZ domain. Interacts (via LIM domains) with SIPA1L1/SPAR; this interaction may occur preferentially with isoform 1.

It localises to the postsynaptic density. The protein resides in the presynapse. It is found in the postsynapse. Its subcellular location is the cytoplasm. The protein localises to the cytosol. May play an important role in the heart development by scaffolding PKC to the Z-disk region. May play a role in the regulation of cardiomyocyte expansion. Isoforms lacking the LIM domains may negatively modulate the scaffolding activity of isoform 1. Overexpression promotes the development of heart hypertrophy. Contributes to the regulation of dendritic spine morphogenesis in neurons. May be required to restrain postsynaptic growth of excitatory synapses. Isoform 1, but not isoform 2, expression favors spine thinning and elongation. In Mus musculus (Mouse), this protein is PDZ and LIM domain protein 5.